Consider the following 200-residue polypeptide: Large ribosomal subunit protein bL25 (200 aa).

This sequence belongs to the bacterial ribosomal protein bL25 family. CTC subfamily. In terms of assembly, part of the 50S ribosomal subunit; part of the 5S rRNA/L5/L18/L25 subcomplex. Contacts the 5S rRNA. Binds to the 5S rRNA independently of L5 and L18.

Functionally, this is one of the proteins that binds to the 5S RNA in the ribosome where it forms part of the central protuberance. In Caldicellulosiruptor bescii (strain ATCC BAA-1888 / DSM 6725 / KCTC 15123 / Z-1320) (Anaerocellum thermophilum), this protein is Large ribosomal subunit protein bL25.